Consider the following 262-residue polypeptide: MTAELSPIDRAKYVAARRAVEYVEDGMRVGLGTGSTAAWMVRCLGELVRDEGMQITGVATSTRTADLARDVGVTVKTLDDVRWLDLTIDGTDEYDPNLNLIKGGGGALLHEKVVATASDQMVVIADPTKQVDTLGAFPLPVEVIPFGWQTTKALIEEMLSNLDVLGRSASLRLSGAEPFRTDEGNLILDLHLRRIAQPAQLSLVLNQIPGVVENGLFLDICDVLVIGNADGTVEVRDINNGTIEHERVDVAETDNLFVEVKE.

Substrate contacts are provided by residues 33–36 (TGST), 89–92 (DGTD), and 102–105 (KGGG). E111 functions as the Proton acceptor in the catalytic mechanism. K129 contributes to the substrate binding site.

It belongs to the ribose 5-phosphate isomerase family. Homodimer.

It carries out the reaction aldehydo-D-ribose 5-phosphate = D-ribulose 5-phosphate. Its pathway is carbohydrate degradation; pentose phosphate pathway; D-ribose 5-phosphate from D-ribulose 5-phosphate (non-oxidative stage): step 1/1. Catalyzes the reversible conversion of ribose-5-phosphate to ribulose 5-phosphate. This is Ribose-5-phosphate isomerase A from Jannaschia sp. (strain CCS1).